Consider the following 124-residue polypeptide: Fluoride-specific ion channel FluC 2 (124 aa).

A run of 4 helical transmembrane segments spans residues 1-21 (MNFLLAGIGASIGAMLRYAIT), 36-58 (SNLPTPTLFINLTGAFILGFIFG), 63-85 (VFIYAIVGTGVLGGYTTFSTMNT), and 104-124 (LSSYLGGLILVFVGYYLAILF). Residues G75 and T78 each contribute to the Na(+) site.

This sequence belongs to the fluoride channel Fluc/FEX (TC 1.A.43) family. Heterodimer composed of FluC1 and FluC2. Neither FluC1 nor FluC2 alone catalyzes fluoride efflux from liposomes.

It is found in the cell membrane. It carries out the reaction fluoride(in) = fluoride(out). Its activity is regulated as follows. Na(+) is not transported, but it plays an essential structural role and its presence is essential for fluoride channel function. Its function is as follows. Fluoride-specific ion channel. Important for reducing fluoride concentration in the cell, thus reducing its toxicity. The chain is Fluoride-specific ion channel FluC 2 from Lactobacillus acidophilus (strain ATCC 700396 / NCK56 / N2 / NCFM).